Reading from the N-terminus, the 539-residue chain is Neutral amino acid transporter B(0) (539 aa).

Methionine 1 is subject to N-acetylmethionine. The Cytoplasmic portion of the chain corresponds to 1–52 (MVADPPKGDPKGYAAAEPTANGVSMLVPIEDVGSLKGGRCGSGDQVRRCLRA). Residues 53-82 (NLLVLLTVVAVVAGVALGLGVSGAGGAFAL) form a helical membrane-spanning segment. The Extracellular portion of the chain corresponds to 83–95 (GPARLEAFSFPGE). A helical membrane pass occupies residues 96–117 (LLLRLLKMIILPLVVCSLIGGA). Residues 118-131 (ASLDPSALGRLGAW) lie on the Cytoplasmic side of the membrane. A helical transmembrane segment spans residues 132–154 (ALLFFLVTTLLASALGVGLALAL). Residues 155–223 (QPGAAFAAIN…GTLVKVPTGG (69 aa)) are Extracellular-facing. Residues asparagine 164 and asparagine 213 are each glycosylated (N-linked (GlcNAc...) asparagine). A helical membrane pass occupies residues 224–247 (EVEGMNILGLVVFAIIFGVALRKL). The Cytoplasmic portion of the chain corresponds to 248–256 (GPEGELLIR). Residues 257 to 284 (FFNSFNDATMVLVSWIMWYAPVGILFLV) form a helical membrane-spanning segment. The Extracellular portion of the chain corresponds to 285 to 305 (AGKIVEMENVGLLFASLGKYI). The chain crosses the membrane as a helical span at residues 306 to 327 (LCCLLGHAIHGLLTLPLIYFLF). Over 328–332 (ARKNP) the chain is Cytoplasmic. Positions 333 to 363 (YRFLWGIMTPLATAFGTSSSSATLPLMMKCV) form an intramembrane region, discontinuously helical. At 364-372 (EEKNGVARH) the chain is on the cytoplasmic side. The helical transmembrane segment at 373–399 (ISRFILPIGATVNMDGAALFQCVAAVF) threads the bilayer. Glycine 381, threonine 383, and asparagine 385 together coordinate Na(+). The Extracellular portion of the chain corresponds to 400 to 412 (IAQLNHRSLDFVK). Residues 413–446 (IITILVTATASSVGAAGIPSGGVLTLAIILEAVN) constitute an intramembrane region (discontinuously helical). Residues 447-459 (LPVHDISLILAVD) are Extracellular-facing. Residues 460–481 (WLVDRSCTVLNVEGDAFGAGLL) form a helical membrane-spanning segment. Residues asparagine 470 and aspartate 474 each coordinate Na(+). Residues 482–539 (QSYLDRTENCNSVPELIQVKSEMPLAALPVPGEEGNPLLKGCPGPAGDADTCEKESVM) lie on the Cytoplasmic side of the membrane. Phosphoserine is present on residues serine 493, serine 502, and serine 537. Residues 518 to 539 (PLLKGCPGPAGDADTCEKESVM) are disordered.

It belongs to the dicarboxylate/amino acid:cation symporter (DAACS) (TC 2.A.23) family. SLC1A5 subfamily. Homotrimer.

It localises to the cell membrane. Its subcellular location is the melanosome. The catalysed reaction is L-glutamine(out) + L-serine(in) + Na(+)(out) = L-glutamine(in) + L-serine(out) + Na(+)(in). The enzyme catalyses L-glutamine(in) + L-serine(out) + Na(+)(out) = L-glutamine(out) + L-serine(in) + Na(+)(in). It carries out the reaction L-threonine(in) + L-glutamine(out) + Na(+)(out) = L-threonine(out) + L-glutamine(in) + Na(+)(in). It catalyses the reaction L-threonine(out) + L-glutamine(in) + Na(+)(out) = L-threonine(in) + L-glutamine(out) + Na(+)(in). The catalysed reaction is L-asparagine(in) + L-glutamine(out) + Na(+)(out) = L-asparagine(out) + L-glutamine(in) + Na(+)(in). The enzyme catalyses L-asparagine(out) + L-glutamine(in) + Na(+)(out) = L-asparagine(in) + L-glutamine(out) + Na(+)(in). It carries out the reaction L-glutamine(in) + L-alanine(out) + Na(+)(out) = L-glutamine(out) + L-alanine(in) + Na(+)(in). It catalyses the reaction L-valine(out) + L-glutamine(in) + Na(+)(out) = L-valine(in) + L-glutamine(out) + Na(+)(in). The catalysed reaction is L-glutamine(in) + L-methionine(out) + Na(+)(out) = L-glutamine(out) + L-methionine(in) + Na(+)(in). The enzyme catalyses L-glutamine(in) + L-glutamate(out) + Na(+)(out) + H(+)(out) = L-glutamine(out) + L-glutamate(in) + Na(+)(in) + H(+)(in). It carries out the reaction D-serine(in) + L-glutamine(out) + Na(+)(out) = D-serine(out) + L-glutamine(in) + Na(+)(in). It catalyses the reaction D-serine(in) + L-alanine(out) + Na(+)(out) = D-serine(out) + L-alanine(in) + Na(+)(in). The catalysed reaction is nitrate(in) = nitrate(out). The enzyme catalyses iodide(out) = iodide(in). It carries out the reaction thiocyanate(in) = thiocyanate(out). Functionally, sodium-coupled antiporter of neutral amino acids. In a tri-substrate transport cycle, exchanges neutral amino acids between the extracellular and intracellular compartments, coupled to the inward cotransport of at least one sodium ion. The preferred substrate is the essential amino acid L-glutamine, a precursor for biosynthesis of proteins, nucleotides and amine sugars as well as an alternative fuel for mitochondrial oxidative phosphorylation. Exchanges L-glutamine with other neutral amino acids such as L-serine, L-threonine and L-asparagine in a bidirectional way. Provides L-glutamine to proliferating stem and activated cells driving the metabolic switch toward cell differentiation. The transport cycle is usually pH-independent, with the exception of L-glutamate. Transports extracellular L-glutamate coupled to the cotransport of one proton and one sodium ion in exchange for intracellular L-glutamine counter-ion. May provide for L-glutamate uptake in glial cells regulating glutamine/glutamate cycle in the nervous system. Can transport D-amino acids. Mediates D-serine release from the retinal glia potentially affecting NMDA receptor function in retinal neurons. Displays sodium- and amino acid-dependent but uncoupled channel-like anion conductance with a preference SCN(-) &gt;&gt; NO3(-) &gt; I(-) &gt; Cl(-). Through binding of the fusogenic protein syncytin-1/ERVW-1 may mediate trophoblasts syncytialization, the spontaneous fusion of their plasma membranes, an essential process in placental development. This chain is Neutral amino acid transporter B(0) (SLC1A5), found in Bos taurus (Bovine).